The sequence spans 578 residues: MSRSFCVFLELHGVGSATLGSGTQVGGITEHLSQRHFSTYFLTAGTVVVHTQYETTATVQVAHYIAHVVFRSFYFHSHNRLQQYRRGFTHTVFECHRSGQFKRNLRRVHIVVRTESQADANIYHRITGYDTILQSVADTFMHRRDEFARNHTTFNFIDKFIACTTRLHRFHFDHNVTILTFTARLFNVFSFGFHFFVDGFAVGHLRYTHISVHTELTLHAVHDNFQVQLAHTGNNGLARFFISAHTERRVFFSQTVQSDTHFLLVGLSFRLNGNVDYRLGEFHAFKDNRGIFCTQSFTVVTSFKPIAAAMSPARTSSISVRSAAVIYTKRADTLTSAFNRVQNSVARFRHARVNTDKGQLTNVFIIQHLESQSGEFLVITGLAAVGFFSIRVNTLNWRNVGRSRQQFNHGIQHTLNTFVFKCRTAQHRLDFTGKRTLTQRASDFFFRQLFTTQVLVHQLFAGFGGGFDHILTPLFGSRNQISRDIVIFESYAFIGFIPNNGFHLQQVHYAFEFTLGTNRNHDWHGIGAQTGFHLLNYAEEVGTLTVHFVYKCQARNLVFIGLAPHSFRQRQNTTYCTV.

This is an uncharacterized protein from Eikenella corrodens.